Here is a 466-residue protein sequence, read N- to C-terminus: Communesin N16 acyltransferase cnsK (466 aa).

The protein belongs to the fumigaclavine B O-acetyltransferase family.

It participates in alkaloid biosynthesis. Its function is as follows. Communesin N16 acyltransferase; part of the gene cluster that mediates the biosynthesis of communesins, a prominent class of indole alkaloids with great potential as pharmaceuticals. Communesins are biosynthesized by the coupling of tryptamine and aurantioclavine, two building blocks derived from L-tryptophan. The L-tryptophan decarboxylase cnsB converts L-tryptophan to tryptamine, whereas the tryptophan dimethylallyltransferase cnsF converts L-tryptophan to 4-dimethylallyl tryptophan which is further transformed to aurantioclavine by the aurantioclavine synthase cnsA, probably aided by the catalase cnsD. The cytochrome P450 monooxygenase cnsC catalyzes the heterodimeric coupling between the two different indole moieties, tryptamine and aurantioclavine, to construct vicinal quaternary stereocenters and yield the heptacyclic communesin scaffold. The O-methyltransferase cnsE then methylates the communesin scaffold to produce communesin K, the simplest characterized communesin that contains the heptacyclic core. The dioxygenase cnsJ converts communesin K into communesin I. Acylation to introduce the hexadienyl group at position N16 of communesin I by the acyltransferase cnsK leads to the production of communesin B. The hexadienyl group is produced by the highly reducing polyketide synthase cnsI, before being hydrolytically removed from cnsI by the serine hydrolase cnsH, converted into hexadienyl-CoA by the CoA ligase cnsG, and then transferred to communesin I by cnsK. Surprisingly, cnsK may also be a promiscuous acyltransferase that can tolerate a range of acyl groups, including acetyl-, propionyl-, and butyryl-CoA, which lead to communesins A, G and H respectively. The roles of the alpha-ketoglutarate-dependent dioxygenases cnsM and cnsP have still to be determined. This chain is Communesin N16 acyltransferase cnsK, found in Penicillium expansum (Blue mold rot fungus).